The chain runs to 248 residues: Large ribosomal subunit protein uL4 (248 aa).

2 disordered regions span residues 72–103 and 173–210; these read RSENVARRVPNAVSGRAAHPPKAEKDQTKSLN and GRSVRAGRGKTRGRKYSQPKSVLVVTSEEPSRAARNLS. A compositionally biased stretch (basic and acidic residues) spans 92–103; sequence PKAEKDQTKSLN. Positions 177 to 189 are enriched in basic residues; it reads RAGRGKTRGRKYS.

The protein belongs to the universal ribosomal protein uL4 family. In terms of assembly, part of the 50S ribosomal subunit.

Functionally, one of the primary rRNA binding proteins, this protein initially binds near the 5'-end of the 23S rRNA. It is important during the early stages of 50S assembly. It makes multiple contacts with different domains of the 23S rRNA in the assembled 50S subunit and ribosome. Its function is as follows. Forms part of the polypeptide exit tunnel. The polypeptide is Large ribosomal subunit protein uL4 (Halorubrum lacusprofundi (strain ATCC 49239 / DSM 5036 / JCM 8891 / ACAM 34)).